Here is a 205-residue protein sequence, read N- to C-terminus: IDFMLQSSLHCKVPNGAIDITSLFINLNASTDAPHFIMEFIQGSPTSMVVLLDLLPRKDLALHPEYIEKYYEDTEVDKQRKIIEQLPQARPYLSPSLFVRSAFSPTAVFFTIDCGKGGEGTLEEIVHGHLASVVKGILQIWLDTCASDASEMEEGEREIMVKRDRTVRSKSIEVDLTANLPRMFGPDVSGRIIAEIRKAFGVQEG.

Substrate-binding residues include E39 and D175.

Homodimer. In terms of processing, the N-terminus is blocked. In etiolated and green primary leaves. Low amount in roots.

The protein resides in the plastid. It is found in the chloroplast stroma. It carries out the reaction primary fluorescent chlorophyll catabolite + 2 oxidized [2Fe-2S]-[ferredoxin] = red chlorophyll catabolite + 2 reduced [2Fe-2S]-[ferredoxin] + 3 H(+). The protein operates within porphyrin-containing compound metabolism; chlorophyll degradation. Catalyzes the key reaction of chlorophyll catabolism, porphyrin macrocycle cleavage of pheophorbide a (pheide a) to a primary fluorescent catabolite (pFCC). Works in a two-step reaction with pheophorbide a oxygenase (PaO) by reducing the C20/C1 double bond of the intermediate, RCC. This chain is Red chlorophyll catabolite reductase (rccR), found in Hordeum vulgare (Barley).